Reading from the N-terminus, the 150-residue chain is Large ribosomal subunit protein uL15 (150 aa).

A disordered region spans residues 1-51 (MKLHTLRPAKGSVKTSKRIGRGTGSGRGGTSTKGHKGAKSRSGYSSKIGFE). The segment covering 21–31 (RGTGSGRGGTS) has biased composition (gly residues).

This sequence belongs to the universal ribosomal protein uL15 family. Part of the 50S ribosomal subunit.

Binds to the 23S rRNA. The polypeptide is Large ribosomal subunit protein uL15 (Cytophaga hutchinsonii (strain ATCC 33406 / DSM 1761 / CIP 103989 / NBRC 15051 / NCIMB 9469 / D465)).